The primary structure comprises 697 residues: Ribosomal RNA large subunit methyltransferase K/L (697 aa).

The THUMP domain maps to 43–154; sequence ILYNSLMWSR…QNLVHIMLDL (112 aa).

The protein belongs to the methyltransferase superfamily. RlmKL family.

The protein localises to the cytoplasm. The catalysed reaction is guanosine(2445) in 23S rRNA + S-adenosyl-L-methionine = N(2)-methylguanosine(2445) in 23S rRNA + S-adenosyl-L-homocysteine + H(+). The enzyme catalyses guanosine(2069) in 23S rRNA + S-adenosyl-L-methionine = N(2)-methylguanosine(2069) in 23S rRNA + S-adenosyl-L-homocysteine + H(+). Functionally, specifically methylates the guanine in position 2445 (m2G2445) and the guanine in position 2069 (m7G2069) of 23S rRNA. The polypeptide is Ribosomal RNA large subunit methyltransferase K/L (Buchnera aphidicola subsp. Schizaphis graminum (strain Sg)).